The primary structure comprises 500 residues: Carnosic acid synthase (500 aa).

The chain crosses the membrane as a helical span at residues 4 to 24; the sequence is LILLSLAFLASCVVAYSRRRP. Cys-443 serves as a coordination point for heme.

Belongs to the cytochrome P450 family. Heme serves as cofactor. Mostly expressed in young leaves, particularly in glandular trichomes.

The protein localises to the membrane. It catalyses the reaction 11-hydroxyferruginol + 3 reduced [NADPH--hemoprotein reductase] + 3 O2 = carnosate + 3 oxidized [NADPH--hemoprotein reductase] + 4 H2O + 4 H(+). The catalysed reaction is miltiradiene + 2 reduced [NADPH--hemoprotein reductase] + 2 O2 = miltiradien-20-al + 2 oxidized [NADPH--hemoprotein reductase] + 3 H2O + 2 H(+). It carries out the reaction ferruginol + 3 reduced [NADPH--hemoprotein reductase] + 3 O2 = pisiferate + 3 oxidized [NADPH--hemoprotein reductase] + 4 H2O + 4 H(+). Its pathway is secondary metabolite biosynthesis; terpenoid biosynthesis. Functionally, monooxygenase involved in the biosynthesis of carnosate, a potent antioxidant labdane-related diterpene natural product. Catalyzes the oxidation of 11-hydroxyferruginol to produce carnosate. Mediates the conversion of miltiradien into miltiradien-20-al. Also involved in the production of pisiferic acid and derivative products from ferruginol. The protein is Carnosic acid synthase of Salvia fruticosa (Greek sage).